The primary structure comprises 254 residues: Probable transcriptional regulator ycf27 (254 aa).

The region spanning 16 to 129 (KVLIVDDEAS…ELEARIRAVL (114 aa)) is the Response regulatory domain. Asp65 carries the post-translational modification 4-aspartylphosphate. Residues 85–103 (DVPIIMLTALGDVADRITG) constitute a DNA-binding region (H-T-H motif). The segment at residues 144–245 (SGIINFNFLT…ARGTGYLFQR (102 aa)) is a DNA-binding region (ompR/PhoB-type).

The protein resides in the plastid. It localises to the chloroplast. Functionally, probable promoter-specific protein mediating the interaction between DNA and RNA polymerase. The polypeptide is Probable transcriptional regulator ycf27 (ycf27) (Guillardia theta (Cryptophyte)).